Reading from the N-terminus, the 423-residue chain is Histone acetyltransferase type B subunit 2 (423 aa).

WD repeat units lie at residues 138–174, 175–224, 228–268, 271–311, and 315–355; these read PHIE…TLEE, SKAQ…KPKS, SHDD…EPVK, PTAS…SPLH, and GHQD…AEQS. The tract at residues 357–361 is interaction with the histone H4 N-terminus; that stretch reads DDADD. The WD 6 repeat unit spans residues 372–412; that stretch reads GHRSPVNEFSFNPQIPWLLASTEEDNVIQAWKVSMKLVNAS.

It belongs to the WD repeat RBAP46/RBAP48/MSI1 family. In terms of assembly, component of the HAT-B complex composed of at least HAT1 and HAT2. The HAT-B complex binds to histone H4 tail.

The protein resides in the cytoplasm. It localises to the nucleus. Its function is as follows. Regulatory subunit of the histone acetylase B (HAT-B) complex. The complex acetylates 'Lys-12' of histone H4 which is required for telomeric silencing. The polypeptide is Histone acetyltransferase type B subunit 2 (HAT2) (Eremothecium gossypii (strain ATCC 10895 / CBS 109.51 / FGSC 9923 / NRRL Y-1056) (Yeast)).